A 92-amino-acid polypeptide reads, in one-letter code: Small ribosomal subunit protein uS19c (92 aa).

Belongs to the universal ribosomal protein uS19 family.

The protein resides in the plastid. The protein localises to the chloroplast. Protein S19 forms a complex with S13 that binds strongly to the 16S ribosomal RNA. The sequence is that of Small ribosomal subunit protein uS19c from Nandina domestica (Heavenly bamboo).